A 553-amino-acid polypeptide reads, in one-letter code: Dihydroxy-acid dehydratase 1 (553 aa).

Asp78 lines the Mg(2+) pocket. Cys119 provides a ligand contact to [2Fe-2S] cluster. Residues Asp120 and Lys121 each coordinate Mg(2+). Lys121 carries the N6-carboxylysine modification. Cys191 is a binding site for [2Fe-2S] cluster. A Mg(2+)-binding site is contributed by Glu444. Ser470 serves as the catalytic Proton acceptor.

Belongs to the IlvD/Edd family. In terms of assembly, homodimer. [2Fe-2S] cluster serves as cofactor. It depends on Mg(2+) as a cofactor.

It catalyses the reaction (2R)-2,3-dihydroxy-3-methylbutanoate = 3-methyl-2-oxobutanoate + H2O. The enzyme catalyses (2R,3R)-2,3-dihydroxy-3-methylpentanoate = (S)-3-methyl-2-oxopentanoate + H2O. It participates in amino-acid biosynthesis; L-isoleucine biosynthesis; L-isoleucine from 2-oxobutanoate: step 3/4. Its pathway is amino-acid biosynthesis; L-valine biosynthesis; L-valine from pyruvate: step 3/4. Functionally, functions in the biosynthesis of branched-chain amino acids. Catalyzes the dehydration of (2R,3R)-2,3-dihydroxy-3-methylpentanoate (2,3-dihydroxy-3-methylvalerate) into 2-oxo-3-methylpentanoate (2-oxo-3-methylvalerate) and of (2R)-2,3-dihydroxy-3-methylbutanoate (2,3-dihydroxyisovalerate) into 2-oxo-3-methylbutanoate (2-oxoisovalerate), the penultimate precursor to L-isoleucine and L-valine, respectively. This is Dihydroxy-acid dehydratase 1 from Methanosarcina acetivorans (strain ATCC 35395 / DSM 2834 / JCM 12185 / C2A).